The chain runs to 173 residues: Large ribosomal subunit protein uL10 (173 aa).

Belongs to the universal ribosomal protein uL10 family. Part of the ribosomal stalk of the 50S ribosomal subunit. The N-terminus interacts with L11 and the large rRNA to form the base of the stalk. The C-terminus forms an elongated spine to which L12 dimers bind in a sequential fashion forming a multimeric L10(L12)X complex.

Its function is as follows. Forms part of the ribosomal stalk, playing a central role in the interaction of the ribosome with GTP-bound translation factors. This Bifidobacterium animalis subsp. lactis (strain AD011) protein is Large ribosomal subunit protein uL10.